Here is a 184-residue protein sequence, read N- to C-terminus: Class II hydrophobin 6 (184 aa).

The signal sequence occupies residues 1 to 16 (MNFMLLSAALASMAVA). Cystine bridges form between Cys-122–Cys-169, Cys-130–Cys-160, Cys-131–Cys-143, and Cys-170–Cys-181.

The protein belongs to the cerato-ulmin hydrophobin family. As to quaternary structure, homotetramer. Further self-assembles to form highly ordered films at water-air interfaces through intermolecular interactions. Expressed in the mycellium.

It is found in the secreted. In terms of biological role, aerial growth, conidiation, and dispersal of filamentous fungi in the environment rely upon a capability of their secreting small amphipathic proteins called hydrophobins (HPBs) with low sequence identity. Class I can self-assemble into an outermost layer of rodlet bundles on aerial cell surfaces, conferring cellular hydrophobicity that supports fungal growth, development and dispersal; whereas Class II form highly ordered films at water-air interfaces through intermolecular interactions but contribute nothing to the rodlet structure. Hcf-6 is a class II hydrophobin that is involved in adhesion and in tomato plants infection. Is secreted to form a coat both around and beneath the fungus. This Passalora fulva (Tomato leaf mold) protein is Class II hydrophobin 6.